The primary structure comprises 85 residues: U4-theraphotoxin-Hhn1m (85 aa).

A signal peptide spans 1-22 (MKVTLIAILTCAAVLVLHTTAA). Residues 23–48 (EELEAESQLVEVGMPDTELAAVDEER) constitute a propeptide that is removed on maturation. 3 cysteine pairs are disulfide-bonded: C52–C66, C56–C77, and C71–C82.

Belongs to the neurotoxin 12 (Hwtx-2) family. 02 (Hwtx-2) subfamily. In terms of tissue distribution, expressed by the venom gland.

It localises to the secreted. Functionally, postsynaptic neurotoxin. This chain is U4-theraphotoxin-Hhn1m, found in Cyriopagopus hainanus (Chinese bird spider).